Here is a 369-residue protein sequence, read N- to C-terminus: UDP-N-acetylglucosamine--N-acetylmuramyl-(pentapeptide) pyrophosphoryl-undecaprenol N-acetylglucosamine transferase (369 aa).

UDP-N-acetyl-alpha-D-glucosamine is bound by residues 10–12, Asn-124, Arg-166, Ser-196, and Gln-300; that span reads TGG.

This sequence belongs to the glycosyltransferase 28 family. MurG subfamily.

It is found in the cell membrane. It carries out the reaction di-trans,octa-cis-undecaprenyl diphospho-N-acetyl-alpha-D-muramoyl-L-alanyl-D-glutamyl-meso-2,6-diaminopimeloyl-D-alanyl-D-alanine + UDP-N-acetyl-alpha-D-glucosamine = di-trans,octa-cis-undecaprenyl diphospho-[N-acetyl-alpha-D-glucosaminyl-(1-&gt;4)]-N-acetyl-alpha-D-muramoyl-L-alanyl-D-glutamyl-meso-2,6-diaminopimeloyl-D-alanyl-D-alanine + UDP + H(+). It participates in cell wall biogenesis; peptidoglycan biosynthesis. Functionally, cell wall formation. Catalyzes the transfer of a GlcNAc subunit on undecaprenyl-pyrophosphoryl-MurNAc-pentapeptide (lipid intermediate I) to form undecaprenyl-pyrophosphoryl-MurNAc-(pentapeptide)GlcNAc (lipid intermediate II). This chain is UDP-N-acetylglucosamine--N-acetylmuramyl-(pentapeptide) pyrophosphoryl-undecaprenol N-acetylglucosamine transferase, found in Desulfitobacterium hafniense (strain Y51).